Here is a 329-residue protein sequence, read N- to C-terminus: Beta-ketoacyl-[acyl-carrier-protein] synthase III (329 aa).

Active-site residues include Cys113 and His255. Residues 256–260 form an ACP-binding region; the sequence is QANQR. The active site involves Asn285.

Belongs to the thiolase-like superfamily. FabH family. In terms of assembly, homodimer.

Its subcellular location is the cytoplasm. It catalyses the reaction malonyl-[ACP] + acetyl-CoA + H(+) = 3-oxobutanoyl-[ACP] + CO2 + CoA. Its pathway is lipid metabolism; fatty acid biosynthesis. In terms of biological role, catalyzes the condensation reaction of fatty acid synthesis by the addition to an acyl acceptor of two carbons from malonyl-ACP. Catalyzes the first condensation reaction which initiates fatty acid synthesis and may therefore play a role in governing the total rate of fatty acid production. Possesses both acetoacetyl-ACP synthase and acetyl transacylase activities. Its substrate specificity determines the biosynthesis of branched-chain and/or straight-chain of fatty acids. The polypeptide is Beta-ketoacyl-[acyl-carrier-protein] synthase III (Chlorobium phaeovibrioides (strain DSM 265 / 1930) (Prosthecochloris vibrioformis (strain DSM 265))).